The primary structure comprises 634 residues: ABC transporter B family member 29, chloroplastic (634 aa).

The transit peptide at 1–51 directs the protein to the chloroplast; the sequence is MSFLLLTPPPCLLIPPPPLSHRRSSSLFLKHPFQPSPRPLSFCKPSALRLR. 6 helical membrane-spanning segments follow: residues 75-95, 119-139, 195-215, 219-239, 307-327, and 330-350; these read TVLL…QIVP, LVLA…QAFL, LLNT…HMIV, ALTL…AYLG, IVQV…VILA, and SLSS…IDPV. Residues 77–362 form the ABC transmembrane type-1 domain; the sequence is LLGWLCSCVS…LGKAYNELKQ (286 aa). The ABC transporter domain maps to 396–633; the sequence is VELCDISFKY…KDSLTSAGLV (238 aa). Residue 430 to 437 participates in ATP binding; the sequence is GPSGGGKT.

It belongs to the ABC transporter superfamily. ABCB family. Multidrug resistance exporter (TC 3.A.1.201) subfamily.

Its subcellular location is the plastid. The protein resides in the chloroplast membrane. In Arabidopsis thaliana (Mouse-ear cress), this protein is ABC transporter B family member 29, chloroplastic (ABCB29).